Here is a 317-residue protein sequence, read N- to C-terminus: Acetyl-coenzyme A carboxylase carboxyl transferase subunit alpha (317 aa).

A CoA carboxyltransferase C-terminal domain is found at 40–294 (RLQKKSEELT…KARLLTDLED (255 aa)).

It belongs to the AccA family. Acetyl-CoA carboxylase is a heterohexamer composed of biotin carboxyl carrier protein (AccB), biotin carboxylase (AccC) and two subunits each of ACCase subunit alpha (AccA) and ACCase subunit beta (AccD).

The protein localises to the cytoplasm. The enzyme catalyses N(6)-carboxybiotinyl-L-lysyl-[protein] + acetyl-CoA = N(6)-biotinyl-L-lysyl-[protein] + malonyl-CoA. It functions in the pathway lipid metabolism; malonyl-CoA biosynthesis; malonyl-CoA from acetyl-CoA: step 1/1. Its function is as follows. Component of the acetyl coenzyme A carboxylase (ACC) complex. First, biotin carboxylase catalyzes the carboxylation of biotin on its carrier protein (BCCP) and then the CO(2) group is transferred by the carboxyltransferase to acetyl-CoA to form malonyl-CoA. The polypeptide is Acetyl-coenzyme A carboxylase carboxyl transferase subunit alpha (Actinobacillus succinogenes (strain ATCC 55618 / DSM 22257 / CCUG 43843 / 130Z)).